Consider the following 127-residue polypeptide: CDGSH iron-sulfur domain-containing protein 3, mitochondrial (127 aa).

The N-terminal 14 residues, 1-14, are a transit peptide targeting the mitochondrion; sequence MRGAGAILRPAARG. Lysine 55 bears the N6-acetyllysine; alternate mark. Lysine 55 carries the post-translational modification N6-succinyllysine; alternate. 4 residues coordinate [2Fe-2S] cluster: cysteine 60, cysteine 62, cysteine 71, and histidine 75. Lysine 86 bears the N6-acetyllysine mark. Cysteine 98, cysteine 100, cysteine 109, and histidine 113 together coordinate [2Fe-2S] cluster.

This sequence belongs to the CISD protein family. As to quaternary structure, monomer. [2Fe-2S] cluster serves as cofactor.

It localises to the mitochondrion. Can transfer its iron-sulfur clusters to the apoferrodoxins FDX1 and FDX2. Contributes to mitochondrial iron homeostasis and in maintaining normal levels of free iron and reactive oxygen species, and thereby contributes to normal mitochondrial function. This chain is CDGSH iron-sulfur domain-containing protein 3, mitochondrial (CISD3), found in Homo sapiens (Human).